We begin with the raw amino-acid sequence, 573 residues long: Putative adenine deaminase PTO1085 (573 aa).

The protein belongs to the metallo-dependent hydrolases superfamily. Adenine deaminase family.

The catalysed reaction is adenine + H2O + H(+) = hypoxanthine + NH4(+). This Picrophilus torridus (strain ATCC 700027 / DSM 9790 / JCM 10055 / NBRC 100828 / KAW 2/3) protein is Putative adenine deaminase PTO1085.